The following is a 1024-amino-acid chain: Nardilysin-like (1024 aa).

The segment at 41 to 103 (PDIYPEGSVP…DEVKGKGDHQ (63 aa)) is disordered. The span at 52–95 (QIDEDDEDGEEEDSDGSSEDDDDDEDDEEDGEGDEEDEDEDEDE) shows a compositional bias: acidic residues. Zn(2+) is bound at residue H129. E132 functions as the Proton acceptor in the catalytic mechanism. H133 contacts Zn(2+). E203 is a catalytic residue. A Zn(2+)-binding site is contributed by E210.

Belongs to the peptidase M16 family. Zn(2+) is required as a cofactor.

It catalyses the reaction Hydrolysis of polypeptides, preferably at -Xaa-|-Arg-Lys-, and less commonly at -Arg-|-Arg-Xaa-, in which Xaa is not Arg or Lys.. In terms of biological role, cleaves peptide substrates on the N-terminus of arginine residues in dibasic pairs. The protein is Nardilysin-like of Arabidopsis thaliana (Mouse-ear cress).